Consider the following 264-residue polypeptide: Vacuolar protein sorting-associated protein 75 (264 aa).

Residue Ser-3 is modified to Phosphoserine. Residues 223-264 (LEDEEGESGLSADGDSEDDDGSLGEVDLPLSDEEPSSKKRKV) are disordered.

Belongs to the nucleosome assembly protein (NAP) family. In terms of assembly, homodimer. Homotetramer. Forms a complex with RTT109; consisting of a VPS75 dimer contacted by two RTT109 subunits. Interacts with RTT109; the interaction is direct. Interacts with ASF1. Interacts with histone H3/H4 heterodimers and heterotetramers via histone H3.

The protein localises to the nucleus. Histone chaperone which acts as a cofactor stimulating histone H3 acetylation by RTT109. Preferentially stimulates histone H3 'Lys-9' acetylation by RTT109. May also stimulate histone H3 'Lys-56' acetylation by RTT109. Assembles nucleosomes (in vitro). The polypeptide is Vacuolar protein sorting-associated protein 75 (VPS75) (Saccharomyces cerevisiae (strain ATCC 204508 / S288c) (Baker's yeast)).